The sequence spans 375 residues: Alcohol dehydrogenase class-3 chain H (375 aa).

An N-acetylalanine modification is found at alanine 1. Zn(2+) contacts are provided by cysteine 46, histidine 68, cysteine 98, cysteine 101, cysteine 104, cysteine 112, and cysteine 175.

It belongs to the zinc-containing alcohol dehydrogenase family. Class-III subfamily. In terms of assembly, homodimer or heterodimer with L chain. It depends on Zn(2+) as a cofactor.

The protein resides in the cytoplasm. It carries out the reaction a primary alcohol + NAD(+) = an aldehyde + NADH + H(+). The catalysed reaction is a secondary alcohol + NAD(+) = a ketone + NADH + H(+). It catalyses the reaction S-(hydroxymethyl)glutathione + NADP(+) = S-formylglutathione + NADPH + H(+). The enzyme catalyses S-(hydroxymethyl)glutathione + NAD(+) = S-formylglutathione + NADH + H(+). Its function is as follows. Class-III ADH is remarkably ineffective in oxidizing ethanol, but it readily catalyzes the oxidation of long-chain primary alcohols and the oxidation of S-(hydroxymethyl) glutathione. The sequence is that of Alcohol dehydrogenase class-3 chain H from Gadus morhua (Atlantic cod).